We begin with the raw amino-acid sequence, 318 residues long: Thymidylate synthase (318 aa).

Residues Arg25 and 180–181 contribute to the dUMP site; that span reads RR. Cys200 serves as the catalytic Nucleophile. Residues 220–223, Asn231, and 261–263 each bind dUMP; these read RSGD and HIY. A (6R)-5,10-methylene-5,6,7,8-tetrahydrofolate-binding site is contributed by Asp223. Ala317 serves as a coordination point for (6R)-5,10-methylene-5,6,7,8-tetrahydrofolate.

It belongs to the thymidylate synthase family. Bacterial-type ThyA subfamily. In terms of assembly, homodimer.

The protein localises to the cytoplasm. It catalyses the reaction dUMP + (6R)-5,10-methylene-5,6,7,8-tetrahydrofolate = 7,8-dihydrofolate + dTMP. The protein operates within pyrimidine metabolism; dTTP biosynthesis. In terms of biological role, catalyzes the reductive methylation of 2'-deoxyuridine-5'-monophosphate (dUMP) to 2'-deoxythymidine-5'-monophosphate (dTMP) while utilizing 5,10-methylenetetrahydrofolate (mTHF) as the methyl donor and reductant in the reaction, yielding dihydrofolate (DHF) as a by-product. This enzymatic reaction provides an intracellular de novo source of dTMP, an essential precursor for DNA biosynthesis. The sequence is that of Thymidylate synthase from Lactobacillus acidophilus (strain ATCC 700396 / NCK56 / N2 / NCFM).